The chain runs to 138 residues: Large ribosomal subunit protein uL16 (138 aa).

A compositionally biased stretch (basic residues) spans 1 to 17 (MLIPRKVKHRKQHHPKQ). The segment at 1-24 (MLIPRKVKHRKQHHPKQRGIASGG) is disordered.

This sequence belongs to the universal ribosomal protein uL16 family. As to quaternary structure, part of the 50S ribosomal subunit.

Binds 23S rRNA and is also seen to make contacts with the A and possibly P site tRNAs. The sequence is that of Large ribosomal subunit protein uL16 from Mycolicibacterium vanbaalenii (strain DSM 7251 / JCM 13017 / BCRC 16820 / KCTC 9966 / NRRL B-24157 / PYR-1) (Mycobacterium vanbaalenii).